A 474-amino-acid polypeptide reads, in one-letter code: MMDRKNASPNSGTVIAIRGSVVDILFAEQLPPIRSLLTTGHQHQILIEVFSQLDEHRVRCIALTPTQGLARGMLVEDSGGPLLAPVGKTILSRMFDVFGNAIDRKAPPIGTQWRSVHNEPPAIAQLATKSQVFETGIKMIDVLMPLERGGKAGLFGGAGVGKTVLLTEMIHNMVGQHAGVSIFCGIGERCREGEELYREMKTAGVLDNMVMVFGQMNEPPGARFRVGHAALTMAEYFRDDEHRDVLLLIDNIFRFIQAGMEVSGLMGQMPARLGYQPTLGTELSQLEDRIANTDSGAITSIQAVYVPADDFTDPAAVHTFSHLSASIVLSRKRASEGLYPAIDPLLSNSKMATPSIIGRRHYDLAQKIRSTLAQYAELKDIIAMLGMEQLSPADHKIVARARRLERFFTQPFFTTEQFTSMPGKLVSLNDALDGCERILHDEFKDYPESALYMIGSIDEAVSKYRPKLDRVNSQ.

156–163 (GGAGVGKT) serves as a coordination point for ATP.

The protein belongs to the ATPase alpha/beta chains family. In terms of assembly, F-type ATPases have 2 components, CF(1) - the catalytic core - and CF(0) - the membrane proton channel. CF(1) has five subunits: alpha(3), beta(3), gamma(1), delta(1), epsilon(1). CF(0) has three main subunits: a(1), b(2) and c(9-12). The alpha and beta chains form an alternating ring which encloses part of the gamma chain. CF(1) is attached to CF(0) by a central stalk formed by the gamma and epsilon chains, while a peripheral stalk is formed by the delta and b chains.

The protein localises to the cell inner membrane. The catalysed reaction is ATP + H2O + 4 H(+)(in) = ADP + phosphate + 5 H(+)(out). Functionally, produces ATP from ADP in the presence of a proton gradient across the membrane. The catalytic sites are hosted primarily by the beta subunits. The sequence is that of ATP synthase subunit beta 2 from Shewanella frigidimarina (strain NCIMB 400).